We begin with the raw amino-acid sequence, 1353 residues long: Patatin-like phospholipase domain-containing protein ZK370.4 (1353 aa).

The helical transmembrane segment at 12–32 (IFLVTFIYNHVLLILFTVCII) threads the bilayer. Over residues 49-64 (TPSSASSSATPSSRNS) the composition is skewed to low complexity. Disordered regions lie at residues 49-188 (TPSS…STAF) and 199-218 (SRSYFRQNQENNKDTRVRPP). Positions 91 to 123 (SPKSGTPTNTQTIEPPTSLNLNMVNSASGSNLS) are enriched in polar residues. Composition is skewed to basic residues over residues 126–138 (RRMRKRDWAKKLY) and 170–184 (PRRRSKHGNSSRRRQ). Residues 245–372 (LKML…VITR), 444–581 (FGLV…VLRR), and 570–692 (IYLP…LGQY) each bind a nucleoside 3',5'-cyclic phosphate. In terms of domain architecture, PNPLA spans 942 to 1108 (LVLGGGGARG…VNNVPADVMR (167 aa)). Residues 946–951 (GGGARG) carry the GXGXXG motif. The GXSXG motif lies at 973–977 (GTSIG). Ser-975 functions as the Nucleophile in the catalytic mechanism. Asp-1095 serves as the catalytic Proton acceptor. Residues 1095-1097 (DGG) carry the DGA/G motif. Disordered stretches follow at residues 1230–1249 (EKETRKFKRQQSRREKPDVS), 1274–1293 (SMSLNPSANGPVGRAGDHFL), and 1305–1353 (YEEE…PPSS). Positions 1328 to 1337 (GPPSSSSSGG) are enriched in low complexity.

It belongs to the NTE family.

The protein localises to the membrane. This chain is Patatin-like phospholipase domain-containing protein ZK370.4, found in Caenorhabditis elegans.